A 636-amino-acid polypeptide reads, in one-letter code: Tumor protein p73 (636 aa).

A transactivation region spans residues 1–46 (MAQSTATSPDGGTTFEHLWSSLEPDSTYFDLPQSSRGNNEVVGGTD). The residue at position 27 (Thr27) is a Phosphothreonine; by PLK1. Residue Tyr28 is modified to Phosphotyrosine; by SRC and HCK. Positions 78-104 (RAASASPYTPEHAASVPTHSPYAQPSS) are disordered. Residues 94–104 (PTHSPYAQPSS) are compositionally biased toward polar residues. Phosphotyrosine; by ABL1 is present on Tyr99. The interval 131–310 (FQQSSTAKSA…DRKADEDHYR (180 aa)) is DNA-binding. Zn(2+)-binding residues include Cys194, His197, Cys258, and Cys262. The disordered stretch occupies residues 314–345 (ALNESSAKNGAASKRAFKQSPPAVPALGAGVK). The interval 345 to 380 (KKRRHGDEDTYYLQVRGRENFEILMKLKESLELMEL) is interaction with HIPK2. The segment at 345–386 (KKRRHGDEDTYYLQVRGRENFEILMKLKESLELMELVPQPLV) is oligomerization. A PPxY motif motif is present at residues 483-487 (PPPPY). Residues 485 to 551 (PPYHADPSLV…WRGLQDLKQG (67 aa)) enclose the SAM domain. A Glycyl lysine isopeptide (Lys-Gly) (interchain with G-Cter in SUMO); in isoform Alpha cross-link involves residue Lys627. A Glycyl lysine isopeptide (Lys-Gly) (interchain with G-Cter in SUMO2) cross-link involves residue Lys627.

The protein belongs to the p53 family. As to quaternary structure, found in a complex with p53/TP53 and CABLES1. The C-terminal oligomerization domain binds to the ABL1 tyrosine kinase SH3 domain. Interacts with HECW2. Isoform Beta interacts homotypically and with p53/TP53, whereas isoform Alpha does not. Isoform Gamma interacts homotypically and with all p73 isoforms. Isoform Delta interacts with isoform Gamma, isoform Alpha, and homotypically. Isoforms Alpha and Beta interact with HIPK2. Isoform Alpha interacts with RANBP9. Isoform Beta interacts with WWOX. Interacts (via SAM domain) with FBXO45 (via B30.2/SPRY domain). Interacts with YAP1 (phosphorylated form). Interacts with HCK (via SH3 domain); this inhibits TP73 activity and degradation. Interacts (via SAM domain) with NQO1; this interaction is NADH-dependent, stabilizes TP73 in response to oxidative stress and protects it from ubiquitin-independent degradation by the 20S proteasome. (Microbial infection) Interacts with Epstein-Barr virus protein EBNA6; this interaction inhibits TP73-mediated apoptotic pathway. It depends on Zn(2+) as a cofactor. In terms of processing, isoform alpha (but not isoform beta) is sumoylated on Lys-627, which potentiates proteasomal degradation but does not affect transcriptional activity. Phosphorylation by PLK1 and PLK3 inhibits the transcription regulator activity and pro-apoptotic function. Post-translationally, higher levels of phosphorylation seen in the brain from patients with Huntington disease. Polyubiquitinated by RCHY1/PIRH2; leading to its degradation by the proteasome. As to expression, expressed in striatal neurons of patients with Huntington disease (at protein level). Brain, kidney, placenta, colon, heart, liver, spleen, skeletal muscle, prostate, thymus and pancreas. Highly expressed in fetal tissue. Expressed in the respiratory epithelium.

It localises to the nucleus. Its subcellular location is the cytoplasm. In terms of biological role, participates in the apoptotic response to DNA damage. Isoforms containing the transactivation domain are pro-apoptotic, isoforms lacking the domain are anti-apoptotic and block the function of p53 and transactivating p73 isoforms. May be a tumor suppressor protein. Is an activator of FOXJ1 expression. It is an essential factor for the positive regulation of lung ciliated cell differentiation. This chain is Tumor protein p73 (TP73), found in Homo sapiens (Human).